The sequence spans 200 residues: ADP-ribosylation factor-like protein 4A (200 aa).

Residue glycine 2 is the site of N-myristoyl glycine attachment. GTP-binding positions include 27 to 34 (GLDCAGKT), 75 to 79 (DVGGQ), and 134 to 137 (NKQD).

It belongs to the small GTPase superfamily. Arf family. In terms of assembly, interacts with CYTH2. Interacts with KPNA2; the interaction is direct. Does not interact with ARL4A. In terms of processing, myristoylated. In terms of tissue distribution, expressed strongly in testis and liver. Expressed slightly in heart, spleen, lung and kidney.

It localises to the cell membrane. Its subcellular location is the cytoplasm. The protein localises to the nucleus. It is found in the nucleolus. In terms of biological role, small GTP-binding protein which cycles between an inactive GDP-bound and an active GTP-bound form, and the rate of cycling is regulated by guanine nucleotide exchange factors (GEF) and GTPase-activating proteins (GAP). GTP-binding protein that does not act as an allosteric activator of the cholera toxin catalytic subunit. Recruits CYTH1, CYTH2, CYTH3 and CYTH4 to the plasma membrane in GDP-bound form. In Mus musculus (Mouse), this protein is ADP-ribosylation factor-like protein 4A (Arl4a).